The following is a 294-amino-acid chain: Indole-3-glycerol phosphate synthase (294 aa).

Belongs to the TrpC family.

It catalyses the reaction 1-(2-carboxyphenylamino)-1-deoxy-D-ribulose 5-phosphate + H(+) = (1S,2R)-1-C-(indol-3-yl)glycerol 3-phosphate + CO2 + H2O. It participates in amino-acid biosynthesis; L-tryptophan biosynthesis; L-tryptophan from chorismate: step 4/5. This Crocosphaera subtropica (strain ATCC 51142 / BH68) (Cyanothece sp. (strain ATCC 51142)) protein is Indole-3-glycerol phosphate synthase.